A 343-amino-acid chain; its full sequence is Heat-inducible transcription repressor HrcA (343 aa).

It belongs to the HrcA family.

In terms of biological role, negative regulator of class I heat shock genes (grpE-dnaK-dnaJ and groELS operons). Prevents heat-shock induction of these operons. The sequence is that of Heat-inducible transcription repressor HrcA from Leptospira biflexa serovar Patoc (strain Patoc 1 / Ames).